The sequence spans 242 residues: Mannosyl-3-phosphoglycerate phosphatase (242 aa).

D8 serves as the catalytic Nucleophile. The Mg(2+) site is built by D8, D10, S169, and D204.

The protein belongs to the HAD-like hydrolase superfamily. MPGP family. Mg(2+) is required as a cofactor.

The protein resides in the cytoplasm. It carries out the reaction 2-O-(alpha-D-mannosyl)-3-phosphoglycerate + H2O = (2R)-2-O-(alpha-D-mannosyl)-glycerate + phosphate. Its pathway is carbohydrate biosynthesis; 2-(alpha-D-mannosyl)-D-glycerate biosynthesis; 2-(alpha-D-mannosyl)-D-glycerate from GDP-alpha-D-mannose (MPG route): step 2/2. In terms of biological role, hydrolyzes mannosyl-3-phosphoglycerate (MPG) to form the osmolyte mannosylglycerate (MG). In Pyrococcus furiosus (strain ATCC 43587 / DSM 3638 / JCM 8422 / Vc1), this protein is Mannosyl-3-phosphoglycerate phosphatase.